We begin with the raw amino-acid sequence, 119 residues long: U-scoloptoxin(01)-Cw1a (119 aa).

The signal sequence occupies residues 1–22 (MSKATNFYLFVLLGVFVALVRT). One can recognise a Chitin-binding type-2 domain in the interval 38–96 (SFSCDGKKPGYYADQQMECQVYHVCTPDNEHAVLLCGPGTIFNQKHLVCDFPSNYACAD). An intrachain disulfide couples cysteine 73 to cysteine 86.

Belongs to the scoloptoxin-01 family. Contains 3 disulfide bonds. In terms of tissue distribution, expressed by the venom gland.

It localises to the secreted. This is U-scoloptoxin(01)-Cw1a from Cormocephalus westwoodi (Westwood's green centipede).